The sequence spans 93 residues: Putative pterin-4-alpha-carbinolamine dehydratase (93 aa).

It belongs to the pterin-4-alpha-carbinolamine dehydratase family.

The enzyme catalyses (4aS,6R)-4a-hydroxy-L-erythro-5,6,7,8-tetrahydrobiopterin = (6R)-L-erythro-6,7-dihydrobiopterin + H2O. The sequence is that of Putative pterin-4-alpha-carbinolamine dehydratase from Chloroflexus aurantiacus (strain ATCC 29366 / DSM 635 / J-10-fl).